Here is a 182-residue protein sequence, read N- to C-terminus: ATP synthase subunit delta (182 aa).

It belongs to the ATPase delta chain family. F-type ATPases have 2 components, F(1) - the catalytic core - and F(0) - the membrane proton channel. F(1) has five subunits: alpha(3), beta(3), gamma(1), delta(1), epsilon(1). CF(0) has four main subunits: a(1), b(1), b'(1) and c(10-14). The alpha and beta chains form an alternating ring which encloses part of the gamma chain. F(1) is attached to F(0) by a central stalk formed by the gamma and epsilon chains, while a peripheral stalk is formed by the delta, b and b' chains.

Its subcellular location is the cellular thylakoid membrane. F(1)F(0) ATP synthase produces ATP from ADP in the presence of a proton or sodium gradient. F-type ATPases consist of two structural domains, F(1) containing the extramembraneous catalytic core and F(0) containing the membrane proton channel, linked together by a central stalk and a peripheral stalk. During catalysis, ATP synthesis in the catalytic domain of F(1) is coupled via a rotary mechanism of the central stalk subunits to proton translocation. Functionally, this protein is part of the stalk that links CF(0) to CF(1). It either transmits conformational changes from CF(0) to CF(1) or is implicated in proton conduction. This Prochlorococcus marinus (strain NATL2A) protein is ATP synthase subunit delta.